A 463-amino-acid chain; its full sequence is Chromosomal replication initiator protein DnaA (463 aa).

Residues 1-84 (MNTNQIILTN…QLFQHYNNAI (84 aa)) are domain I, interacts with DnaA modulators. The segment at 84–124 (IKTVEIITKELPASNQATLELPTKTFADIGSSELNSENIFS) is domain II. The segment at 125–343 (TFDIRFTFDN…GALNKVIAHS (219 aa)) is domain III, AAA+ region. ATP-binding residues include Gly-171, Gly-173, Lys-174, and Thr-175. The segment at 344–463 (NFTAKEITLE…INLMMKILQN (120 aa)) is domain IV, binds dsDNA.

The protein belongs to the DnaA family. In terms of assembly, oligomerizes as a right-handed, spiral filament on DNA at oriC.

It is found in the cytoplasm. In terms of biological role, plays an essential role in the initiation and regulation of chromosomal replication. ATP-DnaA binds to the origin of replication (oriC) to initiate formation of the DNA replication initiation complex once per cell cycle. Binds the DnaA box (a 9 base pair repeat at the origin) and separates the double-stranded (ds)DNA. Forms a right-handed helical filament on oriC DNA; dsDNA binds to the exterior of the filament while single-stranded (ss)DNA is stabiized in the filament's interior. The ATP-DnaA-oriC complex binds and stabilizes one strand of the AT-rich DNA unwinding element (DUE), permitting loading of DNA polymerase. After initiation quickly degrades to an ADP-DnaA complex that is not apt for DNA replication. Binds acidic phospholipids. This Rickettsia bellii (strain OSU 85-389) protein is Chromosomal replication initiator protein DnaA.